A 381-amino-acid polypeptide reads, in one-letter code: Flagellar P-ring protein (381 aa).

Positions 1–33 are cleaved as a signal peptide; that stretch reads MQFFNTLHPTRPHWLLAALCLIASLLGAGTAQA.

This sequence belongs to the FlgI family. In terms of assembly, the basal body constitutes a major portion of the flagellar organelle and consists of four rings (L,P,S, and M) mounted on a central rod.

It localises to the periplasm. It is found in the bacterial flagellum basal body. Its function is as follows. Assembles around the rod to form the L-ring and probably protects the motor/basal body from shearing forces during rotation. In Albidiferax ferrireducens (strain ATCC BAA-621 / DSM 15236 / T118) (Rhodoferax ferrireducens), this protein is Flagellar P-ring protein.